We begin with the raw amino-acid sequence, 152 residues long: Ribosome maturation factor RimP (152 aa).

It belongs to the RimP family.

It is found in the cytoplasm. In terms of biological role, required for maturation of 30S ribosomal subunits. In Burkholderia orbicola (strain MC0-3), this protein is Ribosome maturation factor RimP.